The following is a 340-amino-acid chain: Photosystem II protein D1 (340 aa).

A run of 3 helical transmembrane segments spans residues 25–42, 114–129, and 138–152; these read YIGW…LATV, HFFL…EWEF, and WIFV…AAAA. Residue His114 coordinates chlorophyll a. Trp122 lines the pheophytin a pocket. The [CaMn4O5] cluster site is built by Asp166 and Glu185. Residues 193–214 form a helical membrane-spanning segment; the sequence is FHILGVAGVFGGSLFSAMHGSL. His194 provides a ligand contact to chlorophyll a. Residues His211 and 260–261 contribute to the a quinone site; that span reads SF. Residue His211 coordinates Fe cation. Position 268 (His268) interacts with Fe cation. The helical transmembrane segment at 270–284 threads the bilayer; sequence FLAAWPVIGIWFTSL. [CaMn4O5] cluster contacts are provided by His328, Glu329, Asp338, and Ala340.

It belongs to the reaction center PufL/M/PsbA/D family. In terms of assembly, PSII is composed of 1 copy each of membrane proteins PsbA, PsbB, PsbC, PsbD, PsbE, PsbF, PsbH, PsbI, PsbJ, PsbK, PsbL, PsbM, PsbT, PsbX, PsbY, PsbZ, Psb30/Ycf12, at least 3 peripheral proteins of the oxygen-evolving complex and a large number of cofactors. It forms dimeric complexes. The D1/D2 heterodimer binds P680, chlorophylls that are the primary electron donor of PSII, and subsequent electron acceptors. It shares a non-heme iron and each subunit binds pheophytin, quinone, additional chlorophylls, carotenoids and lipids. D1 provides most of the ligands for the Mn4-Ca-O5 cluster of the oxygen-evolving complex (OEC). There is also a Cl(-1) ion associated with D1 and D2, which is required for oxygen evolution. The PSII complex binds additional chlorophylls, carotenoids and specific lipids. serves as cofactor. In terms of processing, tyr-157 forms a radical intermediate that is referred to as redox-active TyrZ, YZ or Y-Z.

The protein localises to the plastid. The protein resides in the chloroplast thylakoid membrane. It carries out the reaction 2 a plastoquinone + 4 hnu + 2 H2O = 2 a plastoquinol + O2. In terms of biological role, photosystem II (PSII) is a light-driven water:plastoquinone oxidoreductase that uses light energy to abstract electrons from H(2)O, generating O(2) and a proton gradient subsequently used for ATP formation. It consists of a core antenna complex that captures photons, and an electron transfer chain that converts photonic excitation into a charge separation. The D1/D2 (PsbA/PsbD) reaction center heterodimer binds P680, the primary electron donor of PSII as well as several subsequent electron acceptors. In Amphidinium operculatum (Dinoflagellate), this protein is Photosystem II protein D1.